Reading from the N-terminus, the 347-residue chain is MSKKIKAGIVGATGYTGVELLRLLAAHPDVEVAAVTSRSEAGTAVADYFPSLRGVYGLAFQTPDEAGLEQCDIVFFATPNGIAMKDAPRLLEQGVRVIDLSADFRIRDIPTWEHWYGMTHAAPGLVSQAVYGLSELNREAVAQARLVANPGCYPTCVSLPLVPLLRQCRLKPGMPLIADCKSGVSGAGRKGNVGSLLCEAGDNFKAYGTAGHRHLPEIRQTIAGLQDGIAEGFVFTPHLAPMIRGMHATVYLHLSDGSDPETVLRDYYRDSPFMDILPAGSTPETRSVRGANLCRISIRQAAQSDVWVVLSVIDNLVKGAAGQAVQNMNIMFGLEETHGLDAIPLLP.

The active site involves Cys152.

It belongs to the NAGSA dehydrogenase family. Type 1 subfamily.

The protein localises to the cytoplasm. The enzyme catalyses N-acetyl-L-glutamate 5-semialdehyde + phosphate + NADP(+) = N-acetyl-L-glutamyl 5-phosphate + NADPH + H(+). It functions in the pathway amino-acid biosynthesis; L-arginine biosynthesis; N(2)-acetyl-L-ornithine from L-glutamate: step 3/4. Functionally, catalyzes the NADPH-dependent reduction of N-acetyl-5-glutamyl phosphate to yield N-acetyl-L-glutamate 5-semialdehyde. The polypeptide is N-acetyl-gamma-glutamyl-phosphate reductase (Neisseria gonorrhoeae (strain ATCC 700825 / FA 1090)).